Here is an 814-residue protein sequence, read N- to C-terminus: E3 ubiquitin-protein ligase TRIM71 (814 aa).

The segment at 12 to 76 (CPLCKEMCVS…SLQLRCPVCD (65 aa)) adopts an RING-type zinc-finger fold. The tract at residues 111–146 (QQQSNGGRTASNRQRSASCSSSGLLRRAPPSQSEPR) is disordered. Low complexity predominate over residues 120–138 (ASNRQRSASCSSSGLLRRA). The B box-type 1; atypical zinc-finger motif lies at 142-189 (QSEPRCSSCDDGNGASSHCLDCQENLCDNCLRAHQRVRLTKDHFIERF). Residues Cys-147, Cys-150, Cys-171, His-175, Cys-224, His-227, Cys-247, and His-252 each contribute to the Zn(2+) site. The B box-type 2 zinc-finger motif lies at 219–260 (PERLYCQQHDEEVLHFYCDSCSVPICRECTMGRHAGHSFVYL). A coiled-coil region spans residues 282–370 (RQAIQLSLEQ…INAVQQVLEE (89 aa)). A Filamin repeat occupies 425–526 (SSGAFAALTK…IENSPFKVNV (102 aa)). NHL repeat units follow at residues 539 to 582 (TLSF…FKPC), 586 to 629 (HHKF…FTFE), 633 to 676 (LLKF…FGPD), 680 to 723 (LNKY…IKPD), 727 to 770 (AHFL…FEPN), and 774 to 814 (LCKF…ILAF).

The protein belongs to the TRIM/RBCC family.

The protein resides in the cytoplasm. It is found in the P-body. The enzyme catalyses S-ubiquitinyl-[E2 ubiquitin-conjugating enzyme]-L-cysteine + [acceptor protein]-L-lysine = [E2 ubiquitin-conjugating enzyme]-L-cysteine + N(6)-ubiquitinyl-[acceptor protein]-L-lysine.. The protein operates within protein modification; protein ubiquitination. E3 ubiquitin-protein ligase that cooperates with the microRNAs (miRNAs) machinery and promotes embryonic stem cells proliferation and maintenance. Binds to miRNAs and participates in post-transcriptional repression of transcripts. Required to maintain proliferation and prevent premature differentiation of neural progenitor cells during early neural development. This is E3 ubiquitin-protein ligase TRIM71 (trim71) from Xenopus tropicalis (Western clawed frog).